Here is a 132-residue protein sequence, read N- to C-terminus: Transcriptional regulator MraZ (132 aa).

SpoVT-AbrB domains are found at residues 5 to 47 (TYEH…SKDD) and 76 to 119 (TVEI…SKNK).

The protein belongs to the MraZ family. As to quaternary structure, forms oligomers.

The protein localises to the cytoplasm. It is found in the nucleoid. The polypeptide is Transcriptional regulator MraZ (Mycoplasma capricolum subsp. capricolum (strain California kid / ATCC 27343 / NCTC 10154)).